Here is a 1985-residue protein sequence, read N- to C-terminus: Histone-lysine N-methyltransferase SETD1B (1985 aa).

The segment covering 1–11 (MENSHPHHHHQ) has biased composition (basic residues). Positions 1–25 (MENSHPHHHHQQPPPQPGPSGERRN) are disordered. The interaction with WDR82 stretch occupies residues 67 to 97 (VEDPRVVGIWTKNKELELSVPKFKIDEFYVG). Positions 92–180 (DEFYVGPVPP…NIIHVELDTK (89 aa)) constitute an RRM domain. 5 disordered regions span residues 234–304 (GCGS…QDPT), 353–710 (GSSG…PPPA), 955–1480 (VKRK…RTGP), 1519–1624 (QLPP…STKL), and 1658–1687 (RGPW…PQPL). Polar residues-rich tracts occupy residues 242 to 258 (VTPN…TAYS), 264 to 273 (TPNSYGQGTP), 281 to 304 (PFSQ…QDPT), and 353 to 365 (GSSG…QSQD). The segment covering 366-381 (ATTFAHTPPPAQTATA) has biased composition (low complexity). Composition is skewed to pro residues over residues 393–404 (TPAPPFPPPPEE), 423–433 (PAPPPLPPAEP), and 440–449 (GTPPGPPPPD). The span at 484-512 (EKPHDSLDSRIEMLLKEQRTKLPFLREQD) shows a compositional bias: basic and acidic residues. The segment covering 522–535 (SPISSSSSQLSPLS) has biased composition (low complexity). A compositionally biased stretch (pro residues) spans 583–594 (PRPPPEPGPPDP). Residues 628–637 (EDMEISDDEM) are compositionally biased toward acidic residues. Residues 650 to 669 (PMVVTPGAGAVAAPNVLAPN) are compositionally biased toward low complexity. The span at 670 to 710 (LPLPPPPGFPPLPPPPPPPPPQPGFPMPPPLPPPPPPPPPA) shows a compositional bias: pro residues. 2 positions are modified to phosphoserine: Ser977 and Ser985. Positions 986–1006 (ERERDRDIADAPCELTKRDPK) are enriched in basic and acidic residues. Residue Ser1022 is modified to Phosphoserine. Low complexity predominate over residues 1032–1055 (LSASSSSSASSSSGSSTTSPSSSA). The span at 1058-1083 (KEEEDRESTEEEEEEEEEEAEEEEEE) shows a compositional bias: acidic residues. Low complexity predominate over residues 1087 to 1097 (SRISSPSSSSS). A compositionally biased stretch (acidic residues) spans 1100 to 1120 (KDDEDDNEADSDGQIDSDIDD). The span at 1143 to 1178 (SITTSKAPAESSSSSSESSGSSEFESSSESESSSSS) shows a compositional bias: low complexity. Residues 1179–1202 (SEDEEEMTVPGVEEEEEEEEEEEK) are compositionally biased toward acidic residues. Over residues 1205 to 1217 (AMAAATVVAMAEE) the composition is skewed to low complexity. The segment covering 1247-1261 (GTEEEVDIEAEDEVP) has biased composition (acidic residues). 3 positions are modified to phosphoserine: Ser1283, Ser1301, and Ser1354. The span at 1331 to 1373 (EPPPMLSLPLQPPLPPPRLLRPPSPPPEPETPEPPKPPVPLEP) shows a compositional bias: pro residues. Residues 1402–1442 (PGGEPPLSGSSSGLSLSSPQVPGSPFSYPSPSPGLSSGGLP) show a composition bias toward low complexity. A compositionally biased stretch (basic residues) spans 1535-1544 (IKRKPGRPRR). Pro residues-rich tracts occupy residues 1600–1619 (PAPP…PPPV) and 1678–1687 (SPEPSPPQPL). A phosphoserine mark is found at Ser1678 and Ser1682. A WDR5 interaction motif (WIN) motif is present at residues 1764–1769 (GCARSE). A disordered region spans residues 1786 to 1819 (SRASTDEPPMDTQGMSIPAQPHASTRAGSERRSE). The RxxxRR motif motif lies at 1817–1822 (RSEQRR). Positions 1846-1963 (KKLKFCKSHI…VNEEITYDYK (118 aa)) constitute an SET domain. S-adenosyl-L-methionine is bound at residue Tyr1962. Residues 1969–1985 (VKIPCLCGSENCRGTLN) enclose the Post-SET domain.

Belongs to the class V-like SAM-binding methyltransferase superfamily. Component of the SET1B/COMPASS complex composed of the catalytic subunit SETD1B, WDR5, WDR82, RBBP5, ASH2L/ASH2, CXXC1/CFP1, HCFC1, DPY30 homotrimer and BOD1. Forms a core complex with the evolutionary conserved subcomplex WRAD composed of WDR5, RBBP5, ASH2L/ASH2 and DPY30 subunits; WRAD differentially stimulates the methyltransferase activity. Interacts with HCFC1 and ASH2L/ASH2. Interacts (via the RRM domain) with WDR82. Interacts (via the RRM domain) with hyperphosphorylated C-terminal domain (CTD) of RNA polymerase II large subunit (POLR2A) only in the presence of WDR82. Binds specifically to CTD heptad repeats phosphorylated on 'Ser-5' of each heptad. Interacts with RBM15. Interacts (via WIN motif) with WDR5. In terms of tissue distribution, widely expressed.

The protein localises to the nucleus. It is found in the nucleus speckle. Its subcellular location is the chromosome. The protein resides in the cytoplasm. It catalyses the reaction L-lysyl(4)-[histone H3] + S-adenosyl-L-methionine = N(6)-methyl-L-lysyl(4)-[histone H3] + S-adenosyl-L-homocysteine + H(+). The catalysed reaction is N(6)-methyl-L-lysyl(4)-[histone H3] + S-adenosyl-L-methionine = N(6),N(6)-dimethyl-L-lysyl(4)-[histone H3] + S-adenosyl-L-homocysteine + H(+). The enzyme catalyses N(6),N(6)-dimethyl-L-lysyl(4)-[histone H3] + S-adenosyl-L-methionine = N(6),N(6),N(6)-trimethyl-L-lysyl(4)-[histone H3] + S-adenosyl-L-homocysteine + H(+). In terms of biological role, histone methyltransferase that catalyzes methyl group transfer from S-adenosyl-L-methionine to the epsilon-amino group of 'Lys-4' of histone H3 (H3K4) via a non-processive mechanism. Part of chromatin remodeling machinery, forms H3K4me1, H3K4me2 and H3K4me3 methylation marks at active chromatin sites where transcription and DNA repair take place. Plays an essential role in regulating the transcriptional programming of multipotent hematopoietic progenitor cells and lymphoid lineage specification during hematopoiesis. The sequence is that of Histone-lysine N-methyltransferase SETD1B (Setd1b) from Mus musculus (Mouse).